The primary structure comprises 345 residues: Hemin transport protein HmuS (345 aa).

This sequence to Y.enterocolitica HemS.

Functionally, part of the binding-protein-dependent transport system for hemin. The protein is Hemin transport protein HmuS (hmuS) of Yersinia pestis.